The primary structure comprises 310 residues: Thioredoxin reductase (310 aa).

FAD is bound at residue 34–41 (NGMQPGGQ). The cysteines at positions 135 and 138 are disulfide-linked. An FAD-binding site is contributed by 281–290 (DVQDKIYRQA).

It belongs to the class-II pyridine nucleotide-disulfide oxidoreductase family. As to quaternary structure, homodimer. It depends on FAD as a cofactor.

The protein resides in the cytoplasm. The catalysed reaction is [thioredoxin]-dithiol + NADP(+) = [thioredoxin]-disulfide + NADPH + H(+). The polypeptide is Thioredoxin reductase (trxB) (Rickettsia conorii (strain ATCC VR-613 / Malish 7)).